Reading from the N-terminus, the 234-residue chain is Small ribosomal subunit protein uS3 (234 aa).

The region spanning 39-107 (VRDYLKKKLS…PVHVNIEEVR (69 aa)) is the KH type-2 domain. A disordered region spans residues 212-234 (EQPAAAEQEKRGKKSGVKHAAAS).

It belongs to the universal ribosomal protein uS3 family. As to quaternary structure, part of the 30S ribosomal subunit. Forms a tight complex with proteins S10 and S14.

In terms of biological role, binds the lower part of the 30S subunit head. Binds mRNA in the 70S ribosome, positioning it for translation. The sequence is that of Small ribosomal subunit protein uS3 from Thiobacillus denitrificans (strain ATCC 25259 / T1).